The primary structure comprises 337 residues: Porphobilinogen deaminase (337 aa).

C254 is modified (S-(dipyrrolylmethanemethyl)cysteine).

It belongs to the HMBS family. Requires dipyrromethane as cofactor.

The catalysed reaction is 4 porphobilinogen + H2O = hydroxymethylbilane + 4 NH4(+). Its pathway is porphyrin-containing compound metabolism; protoporphyrin-IX biosynthesis; coproporphyrinogen-III from 5-aminolevulinate: step 2/4. Tetrapolymerization of the monopyrrole PBG into the hydroxymethylbilane pre-uroporphyrinogen in several discrete steps. The polypeptide is Porphobilinogen deaminase (pda-1) (Neurospora crassa (strain ATCC 24698 / 74-OR23-1A / CBS 708.71 / DSM 1257 / FGSC 987)).